Reading from the N-terminus, the 384-residue chain is GTPase Obg (384 aa).

The Obg domain maps to 1-159 (MKFIDEAKIE…RSLQLELKVL (159 aa)). The tract at residues 20–46 (ATSFRREKFVPRGGPDGGDGGKGGSVW) is disordered. Positions 33–43 (GPDGGDGGKGG) are enriched in gly residues. An OBG-type G domain is found at 160–348 (ADVGLLGMPN…LVHQINQYLT (189 aa)). Residues 166-173 (GMPNAGKS), 191-195 (FTTLH), 213-216 (DIPG), 284-287 (NKLD), and 329-331 (SAL) each bind GTP. The Mg(2+) site is built by serine 173 and threonine 193.

It belongs to the TRAFAC class OBG-HflX-like GTPase superfamily. OBG GTPase family. In terms of assembly, monomer. Requires Mg(2+) as cofactor.

Its subcellular location is the cytoplasm. An essential GTPase which binds GTP, GDP and possibly (p)ppGpp with moderate affinity, with high nucleotide exchange rates and a fairly low GTP hydrolysis rate. Plays a role in control of the cell cycle, stress response, ribosome biogenesis and in those bacteria that undergo differentiation, in morphogenesis control. The polypeptide is GTPase Obg (Neisseria meningitidis serogroup C (strain 053442)).